A 371-amino-acid chain; its full sequence is N-acetyldiaminopimelate deacetylase (371 aa).

The active site involves D68. The active-site Proton acceptor is the E127.

The protein belongs to the peptidase M20A family. N-acetyldiaminopimelate deacetylase subfamily.

It carries out the reaction N-acetyl-(2S,6S)-2,6-diaminopimelate + H2O = (2S,6S)-2,6-diaminopimelate + acetate. Its pathway is amino-acid biosynthesis; L-lysine biosynthesis via DAP pathway; LL-2,6-diaminopimelate from (S)-tetrahydrodipicolinate (acetylase route): step 3/3. Functionally, catalyzes the conversion of N-acetyl-diaminopimelate to diaminopimelate and acetate. This chain is N-acetyldiaminopimelate deacetylase, found in Listeria monocytogenes serovar 1/2a (strain ATCC BAA-679 / EGD-e).